Here is a 507-residue protein sequence, read N- to C-terminus: RNA-binding protein Nova-1 (507 aa).

Residues 1–44 (MMAAAPIQQNGTHTGVPIDLDPPDSRKRPLEAPPEAGSTKRTNT) are disordered. The Bipartite nuclear localization signal signature appears at 27 to 43 (KRPLEAPPEAGSTKRTN). Residues 49–116 (QYFLKVLIPS…EALNAVHGFI (68 aa)) enclose the KH 1 domain. Residues 139–171 (QTTVNPDRIKQTLPSSPTTTKSSPSDPMTTSRA) form a disordered region. Residues 150-169 (TLPSSPTTTKSSPSDPMTTS) show a composition bias toward low complexity. Ser-154 carries the phosphoserine modification. KH domains follow at residues 171-237 (ANQV…VELI) and 421-488 (KDVV…QYLI). Positions 419 to 503 (GSKDVVEIAV…YEQGVRAANP (85 aa)) are required for RNA binding.

In terms of assembly, interacts with PTBP2; the interaction is direct. In terms of tissue distribution, expressed in neurons of the cortex, sub-cortex, cerebellum and brainstem (at protein level). Expressed in motor neurons, but not in glia.

The protein resides in the nucleus. Functionally, functions to regulate alternative splicing in neurons by binding pre-mRNA in a sequence-specific manner to activate exon inclusion or exclusion. It binds specifically to the sequences 5'-YCAY-3' and regulates splicing in only a subset of regulated exons. Binding to an exonic 5'-YCAY-3' cluster changes the protein complexes assembled on pre-mRNA, blocking U1 snRNP binding and exon inclusion, whereas binding to an intronic 5'-YCAY-3' cluster enhances spliceosome assembly and exon inclusion. Binding to 5'-YCAY-3' clusters results in a local and asymmetric action to regulate spliceosome assembly and alternative splicing in neurons. Binding to an exonic 5'-YCAY-3' cluster changed the protein complexes assembled on pre-mRNA, blocking U1 snRNP (small nuclear ribonucleoprotein) binding and exon inclusion, whereas binding to an intronic 5'-YCAY-3' cluster enhanced spliceosome assembly and exon inclusion. With NOVA1, they perform unique biological functions in different brain areas and cell types. Autoregulates its own expression by acting as a splicing repressor. Acts to activate the inclusion of exon E3A in the glycine receptor alpha-2 chain and of exon E9 in gamma-aminobutyric-acid receptor gamma-2 subunit via a distal downstream UCAU-rich intronic splicing enhancer. Acts to regulate a novel glycine receptor alpha-2 chain splice variant (alpha-2N) in developing spinal cord. The polypeptide is RNA-binding protein Nova-1 (Mus musculus (Mouse)).